A 344-amino-acid polypeptide reads, in one-letter code: Trace amine-associated receptor 8c (344 aa).

Residues 1 to 36 (MTSNFSQATLQLCYENVNASCIKTPYSPGLRVLLYM) lie on the Extracellular side of the membrane. Residues Asn4 and Asn18 are each glycosylated (N-linked (GlcNAc...) asparagine). 2 disulfides stabilise this stretch: Cys21/Cys185 and Cys96/Cys189. Residues 37 to 57 (VFGFGAVLAVCGNLLVVISVL) traverse the membrane as a helical segment. At 58–67 (HFKQLHSPAN) the chain is on the cytoplasmic side. The helical transmembrane segment at 68 to 88 (FLIASLASADFLVGISVMPFS) threads the bilayer. Over 89–102 (MVRSIESCWYFGDT) the chain is Extracellular. Residues 103-127 (FCSLHSCCDVAFCYSSALHLCFISV) traverse the membrane as a helical segment. Over 128–146 (DRYIAVTDPLVYPTKFTVS) the chain is Cytoplasmic. A helical membrane pass occupies residues 147-167 (VSGICISISWILPLVYSSAVF). Residues 168 to 196 (YTGISAMGIENLVSALNCVGGCQVVVNQD) lie on the Extracellular side of the membrane. The chain crosses the membrane as a helical span at residues 197–217 (WVLISFLLFFIPTLVMIILYS). Residues 218–260 (KIFLVAKQQAVKIETSVSGSKGESSLESHKARVAKRERKAAKT) are Cytoplasmic-facing. The helical transmembrane segment at 261–281 (LGVTVLAFIVSWLPYTIDTLI) threads the bilayer. The Extracellular portion of the chain corresponds to 282-295 (DAFMGFITPAYVYE). Residues 296–319 (FCCWSAYYNSAMNPLIYAFFYPWF) form a helical membrane-spanning segment. Residues 320–344 (RKAMKLILSGKILKGHSSTTSLFSE) lie on the Cytoplasmic side of the membrane.

The protein belongs to the G-protein coupled receptor 1 family.

It is found in the cell membrane. Olfactory receptor activated by trace amines, such as N-methylpiperidine and N,N-dimethylcyclohexylamine. Trace amine compounds are enriched in animal body fluids and act on trace amine-associated receptors (TAARs) to elicit both intraspecific and interspecific innate behaviors. Ligand-binding causes a conformation change that triggers signaling via G(s)-class of G alpha proteins (GNAL or GNAS). The polypeptide is Trace amine-associated receptor 8c (Rattus norvegicus (Rat)).